Reading from the N-terminus, the 116-residue chain is uncharacterized protein (116 aa).

A helical membrane pass occupies residues 89-109 (VGFVILILLYILTNPNAIELI).

Belongs to the M.jannaschii MJ0023/MJ0349/MJ1072/MJ1074/MJ1107/MJECL16 family.

The protein resides in the membrane. This is an uncharacterized protein from Methanocaldococcus jannaschii (strain ATCC 43067 / DSM 2661 / JAL-1 / JCM 10045 / NBRC 100440) (Methanococcus jannaschii).